The primary structure comprises 357 residues: tRNA N6-adenosine threonylcarbamoyltransferase (357 aa).

Positions 120 and 124 each coordinate Fe cation. Residues 143 to 147, Asp176, Gly189, and Asn289 each bind substrate; that span reads LVSGG. Residue Asp317 coordinates Fe cation.

This sequence belongs to the KAE1 / TsaD family. The cofactor is Fe(2+).

It is found in the cytoplasm. The catalysed reaction is L-threonylcarbamoyladenylate + adenosine(37) in tRNA = N(6)-L-threonylcarbamoyladenosine(37) in tRNA + AMP + H(+). Required for the formation of a threonylcarbamoyl group on adenosine at position 37 (t(6)A37) in tRNAs that read codons beginning with adenine. Is involved in the transfer of the threonylcarbamoyl moiety of threonylcarbamoyl-AMP (TC-AMP) to the N6 group of A37, together with TsaE and TsaB. TsaD likely plays a direct catalytic role in this reaction. The chain is tRNA N6-adenosine threonylcarbamoyltransferase from Polynucleobacter asymbioticus (strain DSM 18221 / CIP 109841 / QLW-P1DMWA-1) (Polynucleobacter necessarius subsp. asymbioticus).